The primary structure comprises 314 residues: tRNA dimethylallyltransferase (314 aa).

An ATP-binding site is contributed by 10–17 (GPTAVGKT). 12–17 (TAVGKT) contributes to the substrate binding site. An interaction with substrate tRNA region spans residues 35–38 (DSMQ).

It belongs to the IPP transferase family. In terms of assembly, monomer. The cofactor is Mg(2+).

The catalysed reaction is adenosine(37) in tRNA + dimethylallyl diphosphate = N(6)-dimethylallyladenosine(37) in tRNA + diphosphate. In terms of biological role, catalyzes the transfer of a dimethylallyl group onto the adenine at position 37 in tRNAs that read codons beginning with uridine, leading to the formation of N6-(dimethylallyl)adenosine (i(6)A). This chain is tRNA dimethylallyltransferase, found in Clostridium novyi (strain NT).